The primary structure comprises 277 residues: 3-methyl-2-oxobutanoate hydroxymethyltransferase (277 aa).

Positions 49 and 88 each coordinate Mg(2+). 3-methyl-2-oxobutanoate is bound by residues 49–50, Asp88, and Lys118; that span reads DS. Residue Glu120 participates in Mg(2+) binding. The Proton acceptor role is filled by Glu186.

The protein belongs to the PanB family. In terms of assembly, homodecamer; pentamer of dimers. Mg(2+) serves as cofactor.

The protein resides in the cytoplasm. The enzyme catalyses 3-methyl-2-oxobutanoate + (6R)-5,10-methylene-5,6,7,8-tetrahydrofolate + H2O = 2-dehydropantoate + (6S)-5,6,7,8-tetrahydrofolate. Its pathway is cofactor biosynthesis; (R)-pantothenate biosynthesis; (R)-pantoate from 3-methyl-2-oxobutanoate: step 1/2. Functionally, catalyzes the reversible reaction in which hydroxymethyl group from 5,10-methylenetetrahydrofolate is transferred onto alpha-ketoisovalerate to form ketopantoate. The chain is 3-methyl-2-oxobutanoate hydroxymethyltransferase from Cereibacter sphaeroides (strain ATCC 17025 / ATH 2.4.3) (Rhodobacter sphaeroides).